We begin with the raw amino-acid sequence, 89 residues long: Small ribosomal subunit protein uS15 (89 aa).

This sequence belongs to the universal ribosomal protein uS15 family. As to quaternary structure, part of the 30S ribosomal subunit. Forms a bridge to the 50S subunit in the 70S ribosome, contacting the 23S rRNA.

One of the primary rRNA binding proteins, it binds directly to 16S rRNA where it helps nucleate assembly of the platform of the 30S subunit by binding and bridging several RNA helices of the 16S rRNA. Its function is as follows. Forms an intersubunit bridge (bridge B4) with the 23S rRNA of the 50S subunit in the ribosome. This Chloroflexus aurantiacus (strain ATCC 29366 / DSM 635 / J-10-fl) protein is Small ribosomal subunit protein uS15.